The following is a 156-amino-acid chain: Isotocin-neurophysin IT 2 (156 aa).

The first 19 residues, 1–19 (MTGAAVSVCLLYALSVCSA), serve as a signal peptide directing secretion. C20 and C25 form a disulfide bridge. Residue G28 is modified to Glycine amide. 7 cysteine pairs are disulfide-bonded: C41–C85, C44–C58, C52–C75, C59–C65, C92–C105, C99–C117, and C106–C111.

The protein belongs to the vasopressin/oxytocin family. Seven disulfide bonds are present in neurophysin.

The protein localises to the secreted. Functionally, isotocin causes contraction of smooth muscles. The sequence is that of Isotocin-neurophysin IT 2 from Oncorhynchus keta (Chum salmon).